Here is a 620-residue protein sequence, read N- to C-terminus: Translation initiation factor IF-2 (620 aa).

The region spanning 119–288 is the tr-type G domain; the sequence is ERPPIVTIMG…IILISELENL (170 aa). A G1 region spans residues 128–135; the sequence is GHVDHGKT. 128–135 contributes to the GTP binding site; the sequence is GHVDHGKT. Positions 153-157 are G2; that stretch reads GITQA. The segment at 175–178 is G3; the sequence is DTPG. Residues 175–179 and 229–232 each bind GTP; these read DTPGH and NKID. Positions 229–232 are G4; sequence NKID. A G5 region spans residues 265 to 267; that stretch reads SAI.

The protein belongs to the TRAFAC class translation factor GTPase superfamily. Classic translation factor GTPase family. IF-2 subfamily.

The protein localises to the cytoplasm. One of the essential components for the initiation of protein synthesis. Protects formylmethionyl-tRNA from spontaneous hydrolysis and promotes its binding to the 30S ribosomal subunits. Also involved in the hydrolysis of GTP during the formation of the 70S ribosomal complex. This Mycoplasma mycoides subsp. mycoides SC (strain CCUG 32753 / NCTC 10114 / PG1) protein is Translation initiation factor IF-2.